A 282-amino-acid polypeptide reads, in one-letter code: DNA-3-methyladenine glycosylase 2 (282 aa).

The active-site Proton acceptor is D238.

It belongs to the alkylbase DNA glycosidase AlkA family. In terms of assembly, monomer.

It carries out the reaction Hydrolysis of alkylated DNA, releasing 3-methyladenine, 3-methylguanine, 7-methylguanine and 7-methyladenine.. Hydrolysis of the deoxyribose N-glycosidic bond to excise 3-methyladenine, 3-methylguanine, 7-methylguanine, O2-methylthymine, and O2-methylcytosine from the damaged DNA polymer formed by alkylation lesions. The chain is DNA-3-methyladenine glycosylase 2 (alkA) from Escherichia coli (strain K12).